The sequence spans 397 residues: Succinate--CoA ligase [ADP-forming] subunit beta (397 aa).

The 246-residue stretch at 9 to 254 folds into the ATP-grasp domain; it reads KELLRGYGAP…TSEEDEKEIE (246 aa). Residues K46, 53–55, E109, A112, and E117 each bind ATP; that span reads GRG. Mg(2+) contacts are provided by N209 and D223. Substrate is bound by residues N274 and 331-333; that span reads GIM.

It belongs to the succinate/malate CoA ligase beta subunit family. Heterotetramer of two alpha and two beta subunits. Mg(2+) serves as cofactor.

It carries out the reaction succinate + ATP + CoA = succinyl-CoA + ADP + phosphate. The catalysed reaction is GTP + succinate + CoA = succinyl-CoA + GDP + phosphate. It functions in the pathway carbohydrate metabolism; tricarboxylic acid cycle; succinate from succinyl-CoA (ligase route): step 1/1. In terms of biological role, succinyl-CoA synthetase functions in the citric acid cycle (TCA), coupling the hydrolysis of succinyl-CoA to the synthesis of either ATP or GTP and thus represents the only step of substrate-level phosphorylation in the TCA. The beta subunit provides nucleotide specificity of the enzyme and binds the substrate succinate, while the binding sites for coenzyme A and phosphate are found in the alpha subunit. This is Succinate--CoA ligase [ADP-forming] subunit beta from Chelativorans sp. (strain BNC1).